A 366-amino-acid polypeptide reads, in one-letter code: MTLDLHELKTLLDDVSEGHRLTVDEAENLFKVRDRSSFFITAAADALREKRCGNAITWVKNQNINCSNVCVNSCGFCGYSCKPGDSKAFELTPELVGEKAALAASRGVTEICTVSGLHPAYDLNSYLSIYQAIRENAPGVHIHASNPMEVAYAARKTGCSTREVLEAFRDAGVGTLCGTAAEILVDEIRDVICPEKISTDDWVRIIKESHNAGIRSTATIMYGHCESVTDQVRHLSILRDIQDETHGFTEFVPLSFIHPGTPLYRKGMARPGATGREDMLMIAISRLFLDNFTNIQVSWVKLGLKMVQIGLMSGANDIGGTLYEESISSSAGAKAGEYLDPADMRYISEDLGRTLVERRTDYSPVH.

One can recognise a Radical SAM core domain in the interval 51-290; the sequence is RCGNAITWVK…MIAISRLFLD (240 aa). [4Fe-4S] cluster contacts are provided by Cys70, Cys74, and Cys77.

Belongs to the radical SAM superfamily. CofH family. As to quaternary structure, consists of two subunits, CofG and CofH. The cofactor is [4Fe-4S] cluster.

It catalyses the reaction 5-amino-6-(D-ribitylamino)uracil + L-tyrosine + S-adenosyl-L-methionine = 5-amino-5-(4-hydroxybenzyl)-6-(D-ribitylimino)-5,6-dihydrouracil + 2-iminoacetate + 5'-deoxyadenosine + L-methionine + H(+). The protein operates within cofactor biosynthesis; coenzyme F0 biosynthesis. In terms of biological role, catalyzes the radical-mediated synthesis of 5-amino-5-(4-hydroxybenzyl)-6-(D-ribitylimino)-5,6-dihydrouracil from 5-amino-6-(D-ribitylamino)uracil and L-tyrosine. The polypeptide is 5-amino-6-(D-ribitylamino)uracil--L-tyrosine 4-hydroxyphenyl transferase (Methanospirillum hungatei JF-1 (strain ATCC 27890 / DSM 864 / NBRC 100397 / JF-1)).